Consider the following 124-residue polypeptide: MPTIQQLIRSQRIKCETKTKSPALKACPQRRGICTRVYTTTPKKPNSALRKVARVRLTTGIEVTAYIPGIGHNLQEHSVVLVRGGRVKDLPGVRYHIVRGSLDTAGVKDRLQSRSKYGVKRPKS.

Belongs to the universal ribosomal protein uS12 family. In terms of assembly, part of the 30S ribosomal subunit.

It is found in the plastid. It localises to the chloroplast. Functionally, with S4 and S5 plays an important role in translational accuracy. Located at the interface of the 30S and 50S subunits. This chain is Small ribosomal subunit protein uS12c (rps12), found in Ostreococcus tauri.